Here is a 188-residue protein sequence, read N- to C-terminus: Putative ankyrin repeat protein FPV230 (188 aa).

ANK repeat units lie at residues 2–31 (ENEL…NPNA), 36–65 (KYMI…DANV), 135–164 (LGST…DINI), and 168–187 (NNNT…YLKC).

In Vertebrata (FPV), this protein is Putative ankyrin repeat protein FPV230.